The chain runs to 420 residues: Subtilisin-like protease 7 (420 aa).

Residues 1 to 20 (MGFITKAIPLALAAASVING) form the signal peptide. The propeptide occupies 21–119 (AEIMETRAGV…IERDARVQIN (99 aa)). Residues 36–118 (KYIVVMNDGM…YIERDARVQI (83 aa)) form the Inhibitor I9 domain. The Peptidase S8 domain occupies 129–413 (SWGLARVGSK…SFPLNIYEEQ (285 aa)). Catalysis depends on charge relay system residues Asp161 and His192. Residues Asn222 and Asn252 are each glycosylated (N-linked (GlcNAc...) asparagine). The Charge relay system role is filled by Ser346. Asn396 carries an N-linked (GlcNAc...) asparagine glycan.

The protein belongs to the peptidase S8 family.

The protein resides in the secreted. Its function is as follows. Secreted subtilisin-like serine protease with keratinolytic activity that contributes to pathogenicity. This Arthroderma benhamiae (strain ATCC MYA-4681 / CBS 112371) (Trichophyton mentagrophytes) protein is Subtilisin-like protease 7 (SUB7).